The following is a 176-amino-acid chain: Large ribosomal subunit protein uL6 (176 aa).

The protein belongs to the universal ribosomal protein uL6 family. Part of the 50S ribosomal subunit.

In terms of biological role, this protein binds to the 23S rRNA, and is important in its secondary structure. It is located near the subunit interface in the base of the L7/L12 stalk, and near the tRNA binding site of the peptidyltransferase center. The polypeptide is Large ribosomal subunit protein uL6 (Paraburkholderia xenovorans (strain LB400)).